A 257-amino-acid chain; its full sequence is E3 ubiquitin-protein ligase RNF170 (257 aa).

The Lumenal segment spans residues 1-24 (MADNQEERPHFPLDEGSIIEGVSD). Residues 25–45 (QVIVVVLLSFVAVGSLIYLLL) traverse the membrane as a helical segment. Residues 46-200 (RNDEQNIHPE…GGLFWMFRIR (155 aa)) lie on the Cytoplasmic side of the membrane. An RING-type zinc finger spans residues 87–130 (CPVCLQQATFPVETNCGHLFCGSCIIAYWRYGTWLGAINCPICR). Residues 201–221 (IVLCLLGALLYLVSPLDIIPE) form a helical membrane-spanning segment. Residue A222 is a topological domain, lumenal. The chain crosses the membrane as a helical span at residues 223–243 (LFGILGFLDDLFVLFLLLIYI). Residues 244-257 (SIMYREVVTQRLYR) lie on the Cytoplasmic side of the membrane.

It localises to the endoplasmic reticulum membrane. It carries out the reaction S-ubiquitinyl-[E2 ubiquitin-conjugating enzyme]-L-cysteine + [acceptor protein]-L-lysine = [E2 ubiquitin-conjugating enzyme]-L-cysteine + N(6)-ubiquitinyl-[acceptor protein]-L-lysine.. It functions in the pathway protein modification; protein ubiquitination. In terms of biological role, E3 ubiquitin-protein ligase that plays an essential role in stimulus-induced inositol 1,4,5-trisphosphate receptor (ITPR) ubiquitination and degradation via the endoplasmic reticulum-associated degradation (ERAD) pathway. Also involved in ITPR turnover in resting cells. This chain is E3 ubiquitin-protein ligase RNF170 (rnf170), found in Xenopus laevis (African clawed frog).